The sequence spans 76 residues: Large ribosomal subunit protein uL24 (76 aa).

The protein belongs to the universal ribosomal protein uL24 family. As to quaternary structure, part of the 50S ribosomal subunit.

One of two assembly initiator proteins, it binds directly to the 5'-end of the 23S rRNA, where it nucleates assembly of the 50S subunit. Its function is as follows. One of the proteins that surrounds the polypeptide exit tunnel on the outside of the subunit. The sequence is that of Large ribosomal subunit protein uL24 from Wolinella succinogenes (strain ATCC 29543 / DSM 1740 / CCUG 13145 / JCM 31913 / LMG 7466 / NCTC 11488 / FDC 602W) (Vibrio succinogenes).